Reading from the N-terminus, the 95-residue chain is Integration host factor subunit beta (95 aa).

Residues 56–76 are disordered; sequence RAPRTGRNPKTGTSVDLDGKY.

It belongs to the bacterial histone-like protein family. As to quaternary structure, heterodimer of an alpha and a beta chain.

This protein is one of the two subunits of integration host factor, a specific DNA-binding protein that functions in genetic recombination as well as in transcriptional and translational control. The protein is Integration host factor subunit beta of Shewanella sediminis (strain HAW-EB3).